The primary structure comprises 248 residues: tRNA pseudouridine synthase A (248 aa).

Aspartate 53 (nucleophile) is an active-site residue. Tyrosine 111 contacts substrate.

It belongs to the tRNA pseudouridine synthase TruA family. As to quaternary structure, homodimer.

The catalysed reaction is uridine(38/39/40) in tRNA = pseudouridine(38/39/40) in tRNA. Formation of pseudouridine at positions 38, 39 and 40 in the anticodon stem and loop of transfer RNAs. In Listeria monocytogenes serotype 4b (strain CLIP80459), this protein is tRNA pseudouridine synthase A.